The chain runs to 429 residues: Cytochrome c biogenesis protein CcsB (429 aa).

3 consecutive transmembrane segments (helical) span residues 14–34, 72–92, and 162–182; these read LKVA…GTAL, SFWF…CSWK, and VGPP…TYGV.

Belongs to the Ccs1/CcsB family. In terms of assembly, may interact with CcsA.

The protein localises to the cellular thylakoid membrane. In terms of biological role, required during biogenesis of c-type cytochromes (cytochrome c6 and cytochrome f) at the step of heme attachment. This Prochlorococcus marinus (strain SARG / CCMP1375 / SS120) protein is Cytochrome c biogenesis protein CcsB.